A 321-amino-acid polypeptide reads, in one-letter code: L-carnitine dehydrogenase (321 aa).

Residue 7-12 (GTGVIG) participates in NAD(+) binding.

Belongs to the 3-hydroxyacyl-CoA dehydrogenase family. L-carnitine dehydrogenase subfamily. Homodimer.

It is found in the cytoplasm. The enzyme catalyses carnitine + NAD(+) = 3-dehydrocarnitine + NADH + H(+). Its pathway is amine and polyamine metabolism; carnitine metabolism. In terms of biological role, catalyzes the NAD(+)-dependent oxidation of L-carnitine to 3-dehydrocarnitine. This chain is L-carnitine dehydrogenase, found in Staphylococcus epidermidis (strain ATCC 12228 / FDA PCI 1200).